A 418-amino-acid chain; its full sequence is Glutamyl-tRNA(Gln) amidotransferase subunit D (418 aa).

The 327-residue stretch at 81 to 407 (PDVKIISTGG…EEAKEMVKKS (327 aa)) folds into the Asparaginase/glutaminase domain. Residues T91, T166, D167, and K243 contribute to the active site.

It belongs to the asparaginase 1 family. GatD subfamily. In terms of assembly, heterodimer of GatD and GatE.

The catalysed reaction is L-glutamyl-tRNA(Gln) + L-glutamine + ATP + H2O = L-glutaminyl-tRNA(Gln) + L-glutamate + ADP + phosphate + H(+). Its function is as follows. Allows the formation of correctly charged Gln-tRNA(Gln) through the transamidation of misacylated Glu-tRNA(Gln) in organisms which lack glutaminyl-tRNA synthetase. The reaction takes place in the presence of glutamine and ATP through an activated gamma-phospho-Glu-tRNA(Gln). The GatDE system is specific for glutamate and does not act on aspartate. The protein is Glutamyl-tRNA(Gln) amidotransferase subunit D of Archaeoglobus fulgidus (strain ATCC 49558 / DSM 4304 / JCM 9628 / NBRC 100126 / VC-16).